Here is a 353-residue protein sequence, read N- to C-terminus: Photosystem II D2 protein (353 aa).

Thr2 is subject to N-acetylthreonine. Thr2 carries the phosphothreonine modification. Residues Cys41–Thr61 traverse the membrane as a helical segment. Residue His118 participates in chlorophyll a binding. The helical transmembrane segment at Gly125–Pro141 threads the bilayer. Pheophytin a-binding residues include Gln130 and Asn143. Residues Val153 to Ser166 traverse the membrane as a helical segment. His198 provides a ligand contact to chlorophyll a. A helical transmembrane segment spans residues Ala208–Asp228. A plastoquinone-binding residues include His215 and Phe262. A Fe cation-binding site is contributed by His215. His269 contacts Fe cation. The chain crosses the membrane as a helical span at residues Gly279–Arg295.

It belongs to the reaction center PufL/M/PsbA/D family. As to quaternary structure, PSII is composed of 1 copy each of membrane proteins PsbA, PsbB, PsbC, PsbD, PsbE, PsbF, PsbH, PsbI, PsbJ, PsbK, PsbL, PsbM, PsbT, PsbX, PsbY, PsbZ, Psb30/Ycf12, at least 3 peripheral proteins of the oxygen-evolving complex and a large number of cofactors. It forms dimeric complexes. The D1/D2 heterodimer binds P680, chlorophylls that are the primary electron donor of PSII, and subsequent electron acceptors. It shares a non-heme iron and each subunit binds pheophytin, quinone, additional chlorophylls, carotenoids and lipids. There is also a Cl(-1) ion associated with D1 and D2, which is required for oxygen evolution. The PSII complex binds additional chlorophylls, carotenoids and specific lipids. serves as cofactor.

It is found in the plastid. The protein resides in the chloroplast thylakoid membrane. It catalyses the reaction 2 a plastoquinone + 4 hnu + 2 H2O = 2 a plastoquinol + O2. In terms of biological role, photosystem II (PSII) is a light-driven water:plastoquinone oxidoreductase that uses light energy to abstract electrons from H(2)O, generating O(2) and a proton gradient subsequently used for ATP formation. It consists of a core antenna complex that captures photons, and an electron transfer chain that converts photonic excitation into a charge separation. The D1/D2 (PsbA/PsbD) reaction center heterodimer binds P680, the primary electron donor of PSII as well as several subsequent electron acceptors. D2 is needed for assembly of a stable PSII complex. The polypeptide is Photosystem II D2 protein (Lemna minor (Common duckweed)).